The primary structure comprises 153 residues: Formate hydrogenlyase regulatory protein HycA (153 aa).

Its function is as follows. Regulatory protein for the formate hydrogenlyase system. Could act by directly interacting with FhlA or by preventing the binding of FhlA to the upstream activatory sequence. The protein is Formate hydrogenlyase regulatory protein HycA (hycA) of Escherichia coli O157:H7.